The primary structure comprises 399 residues: Bone morphogenetic protein 8B (399 aa).

The first 19 residues, 1-19 (MAARPGLLWLLGLALCVLG), serve as a signal peptide directing secretion. Positions 20–260 (GGHLSHPPHV…ANQSPVRAPR (241 aa)) are excised as a propeptide. N-linked (GlcNAc...) asparagine glycans are attached at residues Asn155 and Asn340. Cystine bridges form between Cys298–Cys364, Cys327–Cys396, and Cys331–Cys398.

The protein belongs to the TGF-beta family. Homodimer; disulfide-linked. In terms of tissue distribution, expressed in testis. Expressed in decidual cells of the uterus and in trophoblast cells of the labyrinthine region of the placenta and in the inner root sheath of hair follicles of early postnatal skin. Expressed in the extraembryonic ectoderm in pregastrula and gastrula stage mouse embryos. Expressed in brown adipose tissue and brain.

Its subcellular location is the secreted. Its function is as follows. Induces cartilage and bone formation. May be the osteoinductive factor responsible for the phenomenon of epithelial osteogenesis. Plays a role in calcium regulation and bone homeostasis. Involved in the generation of primordial germ cells; this function involves Bmp4 in a synergistic manner though separate receptor complexes seem to be involved. Required for the initiation and maintenance of spermatogenesis. Signaling protein involved in regulation of thermogenesis and energy balance. Proposed to increase the peripheral response of brown adipose tissue (BAT) to adrenergic stimulation while acting centrally in the hypothalamus to increase sympathetic output to BAT. The sequence is that of Bone morphogenetic protein 8B (Bmp8b) from Mus musculus (Mouse).